The sequence spans 252 residues: Chitooligosaccharide deacetylase (252 aa).

Residues His-61 and His-125 each contribute to the Mg(2+) site.

It belongs to the YdjC deacetylase family. ChbG subfamily. Homodimer. It depends on Mg(2+) as a cofactor.

The protein resides in the cytoplasm. The catalysed reaction is N,N'-diacetylchitobiose + H2O = N-acetyl-beta-D-glucosaminyl-(1-&gt;4)-D-glucosamine + acetate. It catalyses the reaction diacetylchitobiose-6'-phosphate + H2O = N'-monoacetylchitobiose-6'-phosphate + acetate. The protein operates within glycan degradation; chitin degradation. Its function is as follows. Involved in the degradation of chitin. ChbG is essential for growth on the acetylated chitooligosaccharides chitobiose and chitotriose but is dispensable for growth on cellobiose and chitosan dimer, the deacetylated form of chitobiose. Deacetylation of chitobiose-6-P and chitotriose-6-P is necessary for both the activation of the chb promoter by the regulatory protein ChbR and the hydrolysis of phosphorylated beta-glucosides by the phospho-beta-glucosidase ChbF. Catalyzes the removal of only one acetyl group from chitobiose-6-P to yield monoacetylchitobiose-6-P, the inducer of ChbR and the substrate of ChbF. In Salmonella dublin (strain CT_02021853), this protein is Chitooligosaccharide deacetylase.